The primary structure comprises 389 residues: Endonuclease 8-like 1 (389 aa).

Catalysis depends on P2, which acts as the Schiff-base intermediate with DNA. The active-site Proton donor is the E3. Catalysis depends on K54, which acts as the Proton donor; for beta-elimination activity. N176 contacts DNA. Residues 278-389 (TIWFQGDPGP…PREAGESSAS (112 aa)) are disordered. Over residues 322 to 333 (SRMRRARKHPPK) the composition is skewed to basic residues. Residues 336–351 (AQQSEGAGLQQNQETP) are compositionally biased toward polar residues. Residues 357–373 (GKRRGQRASTGHRRRPK) are compositionally biased toward basic residues. The segment covering 374-389 (TIPDTRPREAGESSAS) has biased composition (basic and acidic residues).

Belongs to the FPG family. In terms of tissue distribution, detected in heart, spleen and lung.

It is found in the cytoplasm. The protein resides in the cytoskeleton. Its subcellular location is the microtubule organizing center. The protein localises to the centrosome. It localises to the nucleus. It is found in the chromosome. It catalyses the reaction 2'-deoxyribonucleotide-(2'-deoxyribose 5'-phosphate)-2'-deoxyribonucleotide-DNA = a 3'-end 2'-deoxyribonucleotide-(2,3-dehydro-2,3-deoxyribose 5'-phosphate)-DNA + a 5'-end 5'-phospho-2'-deoxyribonucleoside-DNA + H(+). Its function is as follows. Involved in base excision repair of DNA damaged by oxidation or by mutagenic agents. Acts as a DNA glycosylase that recognizes and removes damaged bases. Has a preference for oxidized pyrimidines, such as thymine glycol, formamidopyrimidine (Fapy) and 5-hydroxyuracil. Has marginal activity towards 8-oxoguanine. Has AP (apurinic/apyrimidinic) lyase activity and introduces nicks in the DNA strand. Cleaves the DNA backbone by beta-delta elimination to generate a single-strand break at the site of the removed base with both 3'- and 5'-phosphates. Has DNA glycosylase/lyase activity towards mismatched uracil and thymine, in particular in U:C and T:C mismatches. Specifically binds 5-hydroxymethylcytosine (5hmC), suggesting that it acts as a specific reader of 5hmC. This is Endonuclease 8-like 1 (Neil1) from Mus musculus (Mouse).